The chain runs to 170 residues: Adenine phosphoribosyltransferase (170 aa).

It belongs to the purine/pyrimidine phosphoribosyltransferase family. Homodimer.

The protein localises to the cytoplasm. The enzyme catalyses AMP + diphosphate = 5-phospho-alpha-D-ribose 1-diphosphate + adenine. It functions in the pathway purine metabolism; AMP biosynthesis via salvage pathway; AMP from adenine: step 1/1. In terms of biological role, catalyzes a salvage reaction resulting in the formation of AMP, that is energically less costly than de novo synthesis. In Streptococcus suis (strain 98HAH33), this protein is Adenine phosphoribosyltransferase.